Consider the following 20-residue polypeptide: Acidic phospholipase A2 CbIbeta (20 aa).

Belongs to the phospholipase A2 family. Group II subfamily. D49 sub-subfamily. Heterodimer of an acidic subunit (CbIalpha or CbIbeta) and a basic subunit (CbII). The acidic subunit (CbI) is non-toxic, and increases the toxicity of the basic subunit (CbII). Ca(2+) is required as a cofactor. In terms of processing, contains 7 disulfide bonds. Expressed by the venom gland.

Its subcellular location is the secreted. It catalyses the reaction a 1,2-diacyl-sn-glycero-3-phosphocholine + H2O = a 1-acyl-sn-glycero-3-phosphocholine + a fatty acid + H(+). In terms of biological role, heterodimer: presynaptic neurotoxin. Its function is as follows. Monomer: Snake venom phospholipase A2 (PLA2) is inactive towards micellar phosphatidylcholine but is weakly active towards non-micellar dithiolecithin. PLA2 catalyzes the calcium-dependent hydrolysis of the 2-acyl groups in 3-sn-phosphoglycerides. The polypeptide is Acidic phospholipase A2 CbIbeta (Pseudocerastes fieldi (Field's horned viper)).